Reading from the N-terminus, the 607-residue chain is Dolichyl-diphosphooligosaccharide--protein glycosyltransferase subunit 1 (607 aa).

The first 24 residues, 1 to 24 (MEVPTARLLLLLLLGAWAPAPESA), serve as a signal peptide directing secretion. Topologically, residues 25 to 434 (SPEAPLLVNE…VVHYTFNKVL (410 aa)) are lumenal. The residue at position 187 (Lys-187) is an N6-acetyllysine. N-linked (GlcNAc...) asparagine glycosylation occurs at Asn-299. The chain crosses the membrane as a helical span at residues 435-455 (MLQEPLLVVAAFYILFFTVII). Over 456–607 (YVRLDFSITK…TKIDHILDAL (152 aa)) the chain is Cytoplasmic. N6-acetyllysine; alternate is present on Lys-538. Lys-538 is covalently cross-linked (Glycyl lysine isopeptide (Lys-Gly) (interchain with G-Cter in SUMO2); alternate).

The protein belongs to the OST1 family. In terms of assembly, component of the oligosaccharyltransferase (OST) complex. OST exists in two different complex forms which contain common core subunits RPN1, RPN2, OST48, OST4, DAD1 and TMEM258, either STT3A or STT3B as catalytic subunits, and form-specific accessory subunits. STT3A complex assembly occurs through the formation of 3 subcomplexes. Subcomplex 1 contains RPN1 and TMEM258, subcomplex 2 contains the STT3A-specific subunits STT3A, DC2/OSTC, and KCP2 as well as the core subunit OST4, and subcomplex 3 contains RPN2, DAD1, and OST48. The STT3A complex can form stable complexes with the Sec61 complex or with both the Sec61 and TRAP complexes. Interacts with TMEM35A/NACHO. In terms of processing, ubiquitinated by the ECS(ASB11) complex. Ufmylated by UFL1 in response to endoplasmic reticulum stress, promoting reticulophagy of endoplasmic reticulum sheets.

Its subcellular location is the endoplasmic reticulum membrane. The protein operates within protein modification; protein glycosylation. Subunit of the oligosaccharyl transferase (OST) complex that catalyzes the initial transfer of a defined glycan (Glc(3)Man(9)GlcNAc(2) in eukaryotes) from the lipid carrier dolichol-pyrophosphate to an asparagine residue within an Asn-X-Ser/Thr consensus motif in nascent polypeptide chains, the first step in protein N-glycosylation. N-glycosylation occurs cotranslationally and the complex associates with the Sec61 complex at the channel-forming translocon complex that mediates protein translocation across the endoplasmic reticulum (ER). All subunits are required for a maximal enzyme activity. The chain is Dolichyl-diphosphooligosaccharide--protein glycosyltransferase subunit 1 from Canis lupus familiaris (Dog).